The sequence spans 484 residues: Probable cytochrome P450 555A1 (484 aa).

The chain crosses the membrane as a helical span at residues 1–21 (MIIIVIVVFLFYFSFLNLNLN). Cys432 contacts heme.

It belongs to the cytochrome P450 family. Heme serves as cofactor.

It is found in the membrane. This chain is Probable cytochrome P450 555A1 (cyp555A1), found in Dictyostelium discoideum (Social amoeba).